The following is a 611-amino-acid chain: Chaperone protein DnaK (611 aa).

Threonine 173 carries the post-translational modification Phosphothreonine; by autocatalysis. The segment covering 577–592 (QAAAGQAEGAQGAQDA) has biased composition (low complexity). A disordered region spans residues 577 to 611 (QAAAGQAEGAQGAQDAGTKKDNVVDAEFEEVKEDK). Positions 600–611 (VDAEFEEVKEDK) are enriched in acidic residues.

Belongs to the heat shock protein 70 family.

Its function is as follows. Acts as a chaperone. The sequence is that of Chaperone protein DnaK from Bacillus cereus (strain G9842).